The chain runs to 610 residues: Alpha-fetoprotein (610 aa).

An N-terminal signal peptide occupies residues Met1–Ser18. 3 consecutive Albumin domains span residues Arg19–Thr210, Lys211–Glu403, and Lys404–Ser602. His22 lines the Cu(2+) pocket. 8 disulfide bridges follow: Cys99–Cys114, Cys113–Cys124, Cys148–Cys193, Cys192–Cys201, Cys224–Cys270, Cys269–Cys277, Cys289–Cys303, and Cys302–Cys314. Ser111 and Ser115 each carry phosphoserine. Asn197 and Asn251 each carry an N-linked (GlcNAc...) asparagine glycan. Residue Ser345 is modified to Phosphoserine. 7 disulfides stabilise this stretch: Cys385/Cys394, Cys417/Cys463, Cys462/Cys473, Cys486/Cys502, Cys501/Cys512, Cys539/Cys584, and Cys583/Cys592. Ser445 is modified (phosphoserine).

This sequence belongs to the ALB/AFP/VDB family. As to quaternary structure, dimeric and trimeric forms have been found in addition to the monomeric form. Sulfated. As to expression, plasma.

The protein localises to the secreted. Its function is as follows. Binds copper, nickel, and fatty acids as well as, and bilirubin less well than, serum albumin. The protein is Alpha-fetoprotein (AFP) of Bos taurus (Bovine).